Consider the following 341-residue polypeptide: Casein kinase I isoform alpha (341 aa).

Residues 16–284 form the Protein kinase domain; sequence YKLIRKIGSG…YLRQLFRILF (269 aa). ATP is bound by residues 22–30 and Lys45; that span reads IGSGSFGDI. Asp135 acts as the Proton acceptor in catalysis. Residues 306–320 are compositionally biased toward polar residues; the sequence is QSQSSGVPGTNTTTQ. The segment at 306–341 is disordered; sequence QSQSSGVPGTNTTTQGATVPSAGVPAGVAPGGTTPQ. A compositionally biased stretch (low complexity) spans 321-341; the sequence is GATVPSAGVPAGVAPGGTTPQ.

This sequence belongs to the protein kinase superfamily. CK1 Ser/Thr protein kinase family. Casein kinase I subfamily.

It catalyses the reaction L-seryl-[protein] + ATP = O-phospho-L-seryl-[protein] + ADP + H(+). The enzyme catalyses L-threonyl-[protein] + ATP = O-phospho-L-threonyl-[protein] + ADP + H(+). This is Casein kinase I isoform alpha (kin-19) from Caenorhabditis elegans.